Consider the following 77-residue polypeptide: Surfactant-associated protein 2 (77 aa).

Residues 1-19 (MESLMRLFLLLALLSSSHA) form the signal peptide. Asn61 carries N-linked (GlcNAc...) asparagine glycosylation.

Post-translationally, N-glycosylated. Expressed in lung, and specifically in alveolar type II epithelial cells.

It localises to the secreted. The protein resides in the cytoplasmic vesicle. The protein localises to the secretory vesicle. Its subcellular location is the golgi apparatus. In terms of biological role, putative surfactant protein. In Mus musculus (Mouse), this protein is Surfactant-associated protein 2.